Consider the following 444-residue polypeptide: Tubulin beta-8 chain (444 aa).

The MREI motif signature appears at 1–4 (MREI). GTP-binding residues include Gln-11, Glu-69, Ser-138, Gly-142, Thr-143, and Gly-144. Residue Glu-69 coordinates Mg(2+). The residue at position 172 (Ser-172) is a Phosphoserine; by CDK1. The GTP site is built by Asn-204 and Asn-226. The residue at position 436 (Glu-436) is a 5-glutamyl polyglutamate.

This sequence belongs to the tubulin family. As to quaternary structure, dimer of alpha and beta chains. A typical microtubule is a hollow water-filled tube with an outer diameter of 25 nm and an inner diameter of 15 nM. Alpha-beta heterodimers associate head-to-tail to form protofilaments running lengthwise along the microtubule wall with the beta-tubulin subunit facing the microtubule plus end conferring a structural polarity. Microtubules usually have 13 protofilaments but different protofilament numbers can be found in some organisms and specialized cells. It depends on Mg(2+) as a cofactor. Some glutamate residues at the C-terminus are polyglycylated, resulting in polyglycine chains on the gamma-carboxyl group. Glycylation is mainly limited to tubulin incorporated into axonemes (cilia and flagella) whereas glutamylation is prevalent in neuronal cells, centrioles, axonemes, and the mitotic spindle. Both modifications can coexist on the same protein on adjacent residues, and lowering polyglycylation levels increases polyglutamylation, and reciprocally. Cilia and flagella glycylation is required for their stability and maintenance. Flagella glycylation controls sperm motility. Post-translationally, some glutamate residues at the C-terminus are polyglutamylated, resulting in polyglutamate chains on the gamma-carboxyl group. Polyglutamylation plays a key role in microtubule severing by spastin (SPAST). SPAST preferentially recognizes and acts on microtubules decorated with short polyglutamate tails: severing activity by SPAST increases as the number of glutamates per tubulin rises from one to eight, but decreases beyond this glutamylation threshold. Glutamylation is also involved in cilia motility. In terms of processing, phosphorylated on Ser-172 by CDK1 during the cell cycle, from metaphase to telophase, but not in interphase. This phosphorylation inhibits tubulin incorporation into microtubules.

It is found in the cytoplasm. Its subcellular location is the cytoskeleton. It localises to the spindle. Tubulin is the major constituent of microtubules, a cylinder consisting of laterally associated linear protofilaments composed of alpha- and beta-tubulin heterodimers. Microtubules grow by the addition of GTP-tubulin dimers to the microtubule end, where a stabilizing cap forms. Below the cap, tubulin dimers are in GDP-bound state, owing to GTPase activity of alpha-tubulin. Has a key role in meiotic spindle assembly and oocyte maturation. This chain is Tubulin beta-8 chain (TUBB8), found in Papio hamadryas (Hamadryas baboon).